The following is an 88-amino-acid chain: Putative membrane protein insertion efficiency factor (88 aa).

The tract at residues Val68 to Leu88 is disordered. A compositionally biased stretch (basic and acidic residues) spans Thr75–Leu88.

The protein belongs to the UPF0161 family.

It localises to the cell inner membrane. Its function is as follows. Could be involved in insertion of integral membrane proteins into the membrane. This is Putative membrane protein insertion efficiency factor from Burkholderia cenocepacia (strain ATCC BAA-245 / DSM 16553 / LMG 16656 / NCTC 13227 / J2315 / CF5610) (Burkholderia cepacia (strain J2315)).